The following is a 165-amino-acid chain: Phosphopantetheine adenylyltransferase (165 aa).

S8 serves as a coordination point for substrate. ATP contacts are provided by residues 8-9 (SF) and H16. Substrate is bound by residues K40, T72, and R86. Residues 87 to 89 (GLR), E97, and 122 to 128 (YSFLSSS) contribute to the ATP site.

It belongs to the bacterial CoaD family. In terms of assembly, homohexamer. It depends on Mg(2+) as a cofactor.

The protein localises to the cytoplasm. The enzyme catalyses (R)-4'-phosphopantetheine + ATP + H(+) = 3'-dephospho-CoA + diphosphate. It participates in cofactor biosynthesis; coenzyme A biosynthesis; CoA from (R)-pantothenate: step 4/5. Its function is as follows. Reversibly transfers an adenylyl group from ATP to 4'-phosphopantetheine, yielding dephospho-CoA (dPCoA) and pyrophosphate. This Synechococcus sp. (strain WH7803) protein is Phosphopantetheine adenylyltransferase.